Reading from the N-terminus, the 153-residue chain is ORM1-like protein 3 (153 aa).

Positions 1-17 are important for ceramide level-sensing; that stretch reads MNVGTAHSEVNPNTRVM. At 1-21 the chain is on the cytoplasmic side; sequence MNVGTAHSEVNPNTRVMNSRG. The next 2 membrane-spanning stretches (helical) occupy residues 22–42 and 43–63; these read IWLS…SIPF and VSVP…MYIF. Residues 64-94 are Cytoplasmic-facing; it reads LHTVKGTPFETPDQGKARLLTHWEQMDYGVQ. The chain crosses the membrane as a helical span at residues 95–117; that stretch reads FTASRKFLTITPIVLYFLTSFYT. Residues 118–121 are Extracellular-facing; sequence KYDQ. Residues 122 to 142 form a helical membrane-spanning segment; sequence VHFILNTVSLMTVLIPKLPQL. Pro-137 is modified (hydroxyproline). Over 143-153 the chain is Cytoplasmic; sequence HGVRIFGINKY.

The protein belongs to the ORM family. As to quaternary structure, ceramide-sensitive subunit of the serine palmitoyltransferase (SPT) complex, which is also composed of SPTLC1, SPTLC2/3 and SPTSSA/B. In terms of processing, when hydroxylated at Pro-137, ubiquitinated via 'Lys-48'-linkage, leading to proteasomal degradation. In endothelial cells, ORMDL3 proteasomal degradation is controlled by the sphingosine 1-phosphate receptor signaling pathway.

The protein localises to the endoplasmic reticulum membrane. Its function is as follows. Plays an essential role in the homeostatic regulation of sphingolipid de novo biosynthesis by modulating the activity of the serine palmitoyltransferase (SPT) in response to ceramide levels. When complexed to SPT, the binding of ceramides to its N-terminus stabilizes a conformation that block SPT substrate entry, hence preventing SPT catalytic activity. Through this mechanism, maintains ceramide levels at sufficient concentrations for the production of complex sphingolipids, but which prevents the accumulation of ceramides to levels that trigger apoptosis. This Mus musculus (Mouse) protein is ORM1-like protein 3 (Ormdl3).